Consider the following 358-residue polypeptide: GMP reductase (358 aa).

Residues 26-27 (SR), Lys78, 130-132 (DVA), and 181-182 (IG) each bind NADP(+). K(+) is bound by residues Gly182, Gly184, and Cys187. The active-site Thioimidate intermediate is the Cys187. The Proton donor/acceptor role is filled by Thr189. Arg190 provides a ligand contact to K(+). GMP is bound by residues 220-222 (DGG), 243-244 (GG), 269-271 (GMS), and 287-291 (RASEG). NADP(+)-binding positions include Met270, 286–287 (YR), and 315–318 (SACT).

Belongs to the IMPDH/GMPR family. GuaC type 1 subfamily. In terms of assembly, homotetramer.

It catalyses the reaction IMP + NH4(+) + NADP(+) = GMP + NADPH + 2 H(+). Catalyzes the irreversible NADPH-dependent deamination of GMP to IMP. It functions in the conversion of nucleobase, nucleoside and nucleotide derivatives of G to A nucleotides, and in maintaining the intracellular balance of A and G nucleotides. In Caenorhabditis elegans, this protein is GMP reductase.